Consider the following 315-residue polypeptide: Glycine--tRNA ligase alpha subunit (315 aa).

This sequence belongs to the class-II aminoacyl-tRNA synthetase family. Tetramer of two alpha and two beta subunits.

It is found in the cytoplasm. The enzyme catalyses tRNA(Gly) + glycine + ATP = glycyl-tRNA(Gly) + AMP + diphosphate. This is Glycine--tRNA ligase alpha subunit from Ectopseudomonas mendocina (strain ymp) (Pseudomonas mendocina).